A 206-amino-acid polypeptide reads, in one-letter code: Cytochrome c oxidase assembly protein CtaG (206 aa).

Residues 1–22 (MTEQPTNRNDVPRRGLGRDATV) are Cytoplasmic-facing. The chain crosses the membrane as a helical; Signal-anchor for type II membrane protein span at residues 23–43 (ASICGLVVALMVGASYAAVPF). Topologically, residues 44–206 (YNWFCRATGF…GEPDSRKGAL (163 aa)) are periplasmic.

Belongs to the COX11/CtaG family.

The protein resides in the cell inner membrane. Exerts its effect at some terminal stage of cytochrome c oxidase synthesis, probably by being involved in the insertion of the copper B into subunit I. The chain is Cytochrome c oxidase assembly protein CtaG from Rhodopseudomonas palustris (strain BisB18).